Consider the following 306-residue polypeptide: UDP-N-acetylenolpyruvoylglucosamine reductase (306 aa).

Residues 28–194 (KIGNISKLFL…LKTELNLKKE (167 aa)) enclose the FAD-binding PCMH-type domain. Ser223 functions as the Proton donor in the catalytic mechanism. The active site involves Glu295.

Belongs to the MurB family. FAD is required as a cofactor.

It localises to the cytoplasm. It carries out the reaction UDP-N-acetyl-alpha-D-muramate + NADP(+) = UDP-N-acetyl-3-O-(1-carboxyvinyl)-alpha-D-glucosamine + NADPH + H(+). It functions in the pathway cell wall biogenesis; peptidoglycan biosynthesis. Functionally, cell wall formation. The chain is UDP-N-acetylenolpyruvoylglucosamine reductase from Borrelia garinii subsp. bavariensis (strain ATCC BAA-2496 / DSM 23469 / PBi) (Borreliella bavariensis).